The chain runs to 481 residues: MNILRRGRLGSNVKEDVMKFTTSLEFDKEIFESDILCDIAHTTMLIEQNVISEENGKKIIAELKKIAEKGMENLDLDPSLDDIHMVIESELIKELGEDVAGRMHTGRSRNDEVATDLRLSLRKKVLEIIGHLITMEQNMLKVSNEHKETLTVGYTHLQQAQPVTFGHHILSHVSAIERDISRFFDTYNRINISPLGCSAMATTGFNLNRKRTQELLGFYDIIENSMDGVSSRDFIVETMANISMLGTNLSKICEELVVFSSAEFNTIEIANEYTSTSSIMPQKKNPDVAEITRAKLSTLNGELVTVLTIMKALPNTYNRDLQEISPHLWKSVYTLIDCIQMVDGMISTIKVNKERMKENAEKNYSTATELADTLVRECGIAFRMAHGIVGELVKRSIEEKVEIKEIILEVLEKNNLSLSQEKIDTALDPFENVKLRNVIGGPAPEEVERAISSFNTKISTHKEKLDEKIAEVNTVNKNLLK.

This sequence belongs to the lyase 1 family. Argininosuccinate lyase subfamily.

It is found in the cytoplasm. The enzyme catalyses 2-(N(omega)-L-arginino)succinate = fumarate + L-arginine. The protein operates within amino-acid biosynthesis; L-arginine biosynthesis; L-arginine from L-ornithine and carbamoyl phosphate: step 3/3. The chain is Argininosuccinate lyase from Methanococcus maripaludis (strain C7 / ATCC BAA-1331).